We begin with the raw amino-acid sequence, 600 residues long: Aspartate--tRNA(Asp/Asn) ligase (600 aa).

An L-aspartate-binding site is contributed by Glu-181. The tract at residues 205-208 (QQFK) is aspartate. Arg-227 serves as a coordination point for L-aspartate. ATP-binding positions include 227 to 229 (RDE) and Gln-236. Residue His-455 participates in L-aspartate binding. An ATP-binding site is contributed by Glu-489. An L-aspartate-binding site is contributed by Arg-496. 541–544 (GIDR) lines the ATP pocket.

It belongs to the class-II aminoacyl-tRNA synthetase family. Type 1 subfamily. As to quaternary structure, homodimer.

It localises to the cytoplasm. It catalyses the reaction tRNA(Asx) + L-aspartate + ATP = L-aspartyl-tRNA(Asx) + AMP + diphosphate. Functionally, aspartyl-tRNA synthetase with relaxed tRNA specificity since it is able to aspartylate not only its cognate tRNA(Asp) but also tRNA(Asn). Reaction proceeds in two steps: L-aspartate is first activated by ATP to form Asp-AMP and then transferred to the acceptor end of tRNA(Asp/Asn). The chain is Aspartate--tRNA(Asp/Asn) ligase from Rubrobacter xylanophilus (strain DSM 9941 / JCM 11954 / NBRC 16129 / PRD-1).